The primary structure comprises 291 residues: NAD kinase (291 aa).

Asp-73 acts as the Proton acceptor in catalysis. Residues Asp-73 to Gly-74, Asn-147 to Asp-148, Arg-175, Asp-177, and Gln-246 each bind NAD(+).

Belongs to the NAD kinase family. Requires a divalent metal cation as cofactor.

It is found in the cytoplasm. It carries out the reaction NAD(+) + ATP = ADP + NADP(+) + H(+). Its function is as follows. Involved in the regulation of the intracellular balance of NAD and NADP, and is a key enzyme in the biosynthesis of NADP. Catalyzes specifically the phosphorylation on 2'-hydroxyl of the adenosine moiety of NAD to yield NADP. This is NAD kinase from Laribacter hongkongensis (strain HLHK9).